A 340-amino-acid polypeptide reads, in one-letter code: Flap endonuclease 1 (340 aa).

The interval 1 to 98 (MGLNLKDLVV…AEIERRKQIK (98 aa)) is N-domain. Mg(2+) is bound by residues aspartate 27, aspartate 80, glutamate 152, glutamate 154, aspartate 173, aspartate 175, and aspartate 236. An I-domain region spans residues 116–258 (DARKYAQQTT…TALKMIKQHS (143 aa)).

Belongs to the XPG/RAD2 endonuclease family. FEN1 subfamily. In terms of assembly, interacts with PCNA. PCNA stimulates the nuclease activity without altering cleavage specificity. Mg(2+) serves as cofactor.

Its function is as follows. Structure-specific nuclease with 5'-flap endonuclease and 5'-3' exonuclease activities involved in DNA replication and repair. During DNA replication, cleaves the 5'-overhanging flap structure that is generated by displacement synthesis when DNA polymerase encounters the 5'-end of a downstream Okazaki fragment. Binds the unpaired 3'-DNA end and kinks the DNA to facilitate 5' cleavage specificity. Cleaves one nucleotide into the double-stranded DNA from the junction in flap DNA, leaving a nick for ligation. Also involved in the base excision repair (BER) pathway. Acts as a genome stabilization factor that prevents flaps from equilibrating into structures that lead to duplications and deletions. Also possesses 5'-3' exonuclease activity on nicked or gapped double-stranded DNA. This chain is Flap endonuclease 1, found in Nitrosopumilus maritimus (strain SCM1).